A 174-amino-acid chain; its full sequence is Guided entry of tail-anchored proteins factor 1 (174 aa).

Topologically, residues methionine 1 to histidine 8 are lumenal. The chain crosses the membrane as a helical span at residues tryptophan 9–proline 29. Residues serine 30–lysine 99 lie on the Cytoplasmic side of the membrane. Residues leucine 39–threonine 94 are a coiled coil. The interaction with GET3/TRC40 stretch occupies residues leucine 39–leucine 97. Residues isoleucine 100–isoleucine 120 form a helical membrane-spanning segment. The Lumenal segment spans residues tryptophan 121–arginine 148. Residues valine 149 to valine 169 form a helical membrane-spanning segment. Residues leucine 170–serine 174 are Cytoplasmic-facing.

Belongs to the WRB/GET1 family. In terms of assembly, component of the Golgi to ER traffic (GET) complex, which is composed of GET1/WRB, CAMLG/GET2 and GET3/TRC40. Within the complex, GET1 and CAMLG form a heterotetramer which is stabilized by phosphatidylinositol binding and which binds to the GET3 homodimer. Interacts with CAMLG (via C-terminus). GET3 shows a higher affinity for CAMLG than for GET1.

It is found in the endoplasmic reticulum membrane. In terms of biological role, required for the post-translational delivery of tail-anchored (TA) proteins to the endoplasmic reticulum (ER). Together with CAMLG/GET2, acts as a membrane receptor for soluble GET3/TRC40, which recognizes and selectively binds the transmembrane domain of TA proteins in the cytosol. Required to ensure correct topology and ER insertion of CAMLG. The sequence is that of Guided entry of tail-anchored proteins factor 1 from Homo sapiens (Human).